A 185-amino-acid chain; its full sequence is Protein GrpE (185 aa).

Belongs to the GrpE family. In terms of assembly, homodimer.

It localises to the cytoplasm. Participates actively in the response to hyperosmotic and heat shock by preventing the aggregation of stress-denatured proteins, in association with DnaK and GrpE. It is the nucleotide exchange factor for DnaK and may function as a thermosensor. Unfolded proteins bind initially to DnaJ; upon interaction with the DnaJ-bound protein, DnaK hydrolyzes its bound ATP, resulting in the formation of a stable complex. GrpE releases ADP from DnaK; ATP binding to DnaK triggers the release of the substrate protein, thus completing the reaction cycle. Several rounds of ATP-dependent interactions between DnaJ, DnaK and GrpE are required for fully efficient folding. The protein is Protein GrpE of Methanobrevibacter smithii (strain ATCC 35061 / DSM 861 / OCM 144 / PS).